We begin with the raw amino-acid sequence, 439 residues long: NAD-dependent malic enzyme 1 (439 aa).

The ACT domain occupies 9–84; the sequence is TLMIETPSVP…GIRLHTVSDE (76 aa). Tyrosine 112 (proton donor) is an active-site residue. Catalysis depends on lysine 167, which acts as the Proton acceptor. Residues glutamate 209, aspartate 210, and aspartate 235 each coordinate a divalent metal cation. NAD(+)-binding positions include 268–271, asparagine 347, and asparagine 373; that span reads LGAA.

The protein belongs to the malic enzymes family. Mg(2+) serves as cofactor. It depends on Mn(2+) as a cofactor.

It carries out the reaction (S)-malate + NAD(+) = pyruvate + CO2 + NADH. The enzyme catalyses oxaloacetate + H(+) = pyruvate + CO2. Functionally, catalyzes the decarboxylation of malate to pyruvate. Is specific for NAD, cannot use NADP. Can also catalyze the decarboxylation of oxaloacetate. Involved in keeping the ATP levels high. In Bacillus subtilis (strain 168), this protein is NAD-dependent malic enzyme 1.